We begin with the raw amino-acid sequence, 330 residues long: tRNA U34 carboxymethyltransferase (330 aa).

Carboxy-S-adenosyl-L-methionine contacts are provided by residues lysine 91, tryptophan 105, lysine 110, glycine 130, 152–154 (DPS), 181–182 (IE), methionine 196, tyrosine 200, and arginine 315.

The protein belongs to the class I-like SAM-binding methyltransferase superfamily. CmoB family. As to quaternary structure, homotetramer.

The enzyme catalyses carboxy-S-adenosyl-L-methionine + 5-hydroxyuridine(34) in tRNA = 5-carboxymethoxyuridine(34) in tRNA + S-adenosyl-L-homocysteine + H(+). Catalyzes carboxymethyl transfer from carboxy-S-adenosyl-L-methionine (Cx-SAM) to 5-hydroxyuridine (ho5U) to form 5-carboxymethoxyuridine (cmo5U) at position 34 in tRNAs. The chain is tRNA U34 carboxymethyltransferase from Shewanella loihica (strain ATCC BAA-1088 / PV-4).